Here is a 155-residue protein sequence, read N- to C-terminus: Aspartate carbamoyltransferase regulatory chain (155 aa).

4 residues coordinate Zn(2+): C110, C115, C139, and C142.

This sequence belongs to the PyrI family. In terms of assembly, contains catalytic and regulatory chains. It depends on Zn(2+) as a cofactor.

Functionally, involved in allosteric regulation of aspartate carbamoyltransferase. In Yersinia pestis bv. Antiqua (strain Antiqua), this protein is Aspartate carbamoyltransferase regulatory chain.